A 231-amino-acid polypeptide reads, in one-letter code: MSEIKDVIVQGLWKNNSALVQLLGLCPLLAVTSTATNALGLGLATTLVLTLTNLTISTLRHWTPSEIRIPIYVMIIASVVSAVQMLINAYAFGLYQSLGIFIPLIVTNCIVVGRAEAFAAKKGPALSALDGFSIGMGATCAMFVLGSLREIIGNGTLFDGADALLGSWAKVLRVEIFHTDSPFLLAMLPPGAFIGLGLMLAGKYLIDEKMKKRRTEAAAERALPNGETGNV.

6 helical membrane passes run 18 to 38 (ALVQ…ATNA), 39 to 59 (LGLG…ISTL), 63 to 83 (TPSE…VSAV), 86 to 106 (LINA…PLIV), 125 to 145 (ALSA…MFVL), and 182 to 202 (PFLL…MLAG).

It belongs to the NqrDE/RnfAE family. As to quaternary structure, the complex is composed of six subunits: RsxA, RsxB, RsxC, RsxD, RsxE and RsxG.

It is found in the cell inner membrane. Its function is as follows. Part of a membrane-bound complex that couples electron transfer with translocation of ions across the membrane. Required to maintain the reduced state of SoxR. This is Ion-translocating oxidoreductase complex subunit E from Escherichia coli O6:K15:H31 (strain 536 / UPEC).